We begin with the raw amino-acid sequence, 314 residues long: Serine acetyltransferase 1, chloroplastic (314 aa).

The protein belongs to the transferase hexapeptide repeat family. As to quaternary structure, homomultimer. Interacts with OASA1 and CYP20-3. Component of the cysteine synthase complex (CSC) composed of two OAS-TL dimers and one SAT hexamer. Mostly expressed in leaves. Localized in cortex, trichomes and vascular tissues, particularly in phloem.

It localises to the plastid. It is found in the chloroplast. Its subcellular location is the cytoplasm. The enzyme catalyses L-serine + acetyl-CoA = O-acetyl-L-serine + CoA. Its pathway is amino-acid biosynthesis; L-cysteine biosynthesis; L-cysteine from L-serine: step 1/2. Serine acetyltransferase which catalyzes the formation of O-acetyl-L-serine from acetyl-CoA and L-serine. Also displays O-acetylserine (thio1)-lyase activity in vitro. May be involved in detoxification process by mediating the production of glutathione. This chain is Serine acetyltransferase 1, chloroplastic (SAT1), found in Arabidopsis thaliana (Mouse-ear cress).